We begin with the raw amino-acid sequence, 185 residues long: Erythropoietin (185 aa).

The signal sequence occupies residues methionine 1 to proline 25. Intrachain disulfides connect cysteine 32-cysteine 180 and cysteine 54-cysteine 58.

Belongs to the EPO/TPO family. As to expression, expressed mainly in heart, liver and brain. Isoform 2 is brain specific.

Its subcellular location is the secreted. Functionally, erythropoietin is the principal hormone involved in the regulation of erythrocyte differentiation and the maintenance of a physiological level of circulating erythrocyte mass. This Takifugu rubripes (Japanese pufferfish) protein is Erythropoietin (epo).